The sequence spans 160 residues: 2-C-methyl-D-erythritol 2,4-cyclodiphosphate synthase (160 aa).

The a divalent metal cation site is built by Asp-12 and His-14. Residues 12 to 14 and 38 to 39 each bind 4-CDP-2-C-methyl-D-erythritol 2-phosphate; these read DVH and HS. His-46 provides a ligand contact to a divalent metal cation. Residues 60–62, 65–69, 136–139, Phe-143, and Arg-146 each bind 4-CDP-2-C-methyl-D-erythritol 2-phosphate; these read DIG, FPDTD, and TTTE.

The protein belongs to the IspF family. As to quaternary structure, homotrimer. A divalent metal cation is required as a cofactor.

The catalysed reaction is 4-CDP-2-C-methyl-D-erythritol 2-phosphate = 2-C-methyl-D-erythritol 2,4-cyclic diphosphate + CMP. The protein operates within isoprenoid biosynthesis; isopentenyl diphosphate biosynthesis via DXP pathway; isopentenyl diphosphate from 1-deoxy-D-xylulose 5-phosphate: step 4/6. Functionally, involved in the biosynthesis of isopentenyl diphosphate (IPP) and dimethylallyl diphosphate (DMAPP), two major building blocks of isoprenoid compounds. Catalyzes the conversion of 4-diphosphocytidyl-2-C-methyl-D-erythritol 2-phosphate (CDP-ME2P) to 2-C-methyl-D-erythritol 2,4-cyclodiphosphate (ME-CPP) with a corresponding release of cytidine 5-monophosphate (CMP). The sequence is that of 2-C-methyl-D-erythritol 2,4-cyclodiphosphate synthase from Acinetobacter baumannii (strain SDF).